A 180-amino-acid polypeptide reads, in one-letter code: uncharacterized protein (180 aa).

This is an uncharacterized protein from Rickettsia prowazekii (strain Madrid E).